The sequence spans 368 residues: Trans-enoyl reductase thnE (368 aa).

53 to 56 (VDVK) is an NADP(+) binding site. 140-147 (LATATAAY) provides a ligand contact to substrate. NADP(+) is bound by residues 179–182 (STAT), 202–205 (SPSN), Tyr-220, and 267–268 (VE). 289–293 (VMTVW) is a substrate binding site. 358-359 (PS) is a binding site for NADP(+).

The protein belongs to the zinc-containing alcohol dehydrogenase family. As to quaternary structure, monomer.

It catalyses the reaction malate + 6 malonyl-CoA + acetyl-CoA + 2 AH2 + 2 S-adenosyl-L-methionine + 5 NADPH + 9 H(+) = trihazone A + 2 A + 2 S-adenosyl-L-homocysteine + 6 CO2 + 5 NADP(+) + 7 CoA + 6 H2O. It participates in secondary metabolite biosynthesis. Trans-enoyl reductase; part of the gene cluster that produces the tetronate natural products trihazones. The PKS-NRPS synthetase thnA with the help of the trans-enoyl reductase thnE are responsible for the synthesis of the carboxylmethyl containing trihazone A. The PKS portion of thnA synthesizes beta-keto-triene chain from one acetyl-CoA and 6 equivalents of malonyl-CoA, in collaboration with thnE, which selectively reduces the enoyl intermediate during the first and fourth iteration of the PKS. The NRPS domain selects and activates malate, of which the alpha-hydroxyl group attacks the completed polyketide acyl-S-ACP chain to form the ester product. Intramolecular Dieckmann cyclization catalyzed by the terminal reductase domain releases the product as trihazone A from the PKS-NPRS. The pathway begins with the formation of trihazone A by the hybrid PKS-NRPS synthetase thnA and the trans-enoyl reductase thnE. Trihazone A is further decarboxylated by the 2-oxoglutarate-dependent dioxygenase thnC to produce trihazone D. The function of the FAD-dependent monooxygenase thnD has still to be identified. The polypeptide is Trans-enoyl reductase thnE (Trichoderma harzianum (Hypocrea lixii)).